The chain runs to 123 residues: Small ribosomal subunit protein uS12 (123 aa).

Asp-89 carries the 3-methylthioaspartic acid modification. A disordered region spans residues 101–123 (SLDTAGVKDRKQSRSKYGAKRPK). The segment covering 113 to 123 (SRSKYGAKRPK) has biased composition (basic residues).

Belongs to the universal ribosomal protein uS12 family. Part of the 30S ribosomal subunit. Contacts proteins S8 and S17. May interact with IF1 in the 30S initiation complex.

With S4 and S5 plays an important role in translational accuracy. In terms of biological role, interacts with and stabilizes bases of the 16S rRNA that are involved in tRNA selection in the A site and with the mRNA backbone. Located at the interface of the 30S and 50S subunits, it traverses the body of the 30S subunit contacting proteins on the other side and probably holding the rRNA structure together. The combined cluster of proteins S8, S12 and S17 appears to hold together the shoulder and platform of the 30S subunit. This chain is Small ribosomal subunit protein uS12, found in Laribacter hongkongensis (strain HLHK9).